Consider the following 537-residue polypeptide: Phosphoenolpyruvate carboxykinase (ATP) (537 aa).

The substrate site is built by Arg61, Tyr195, and Lys201. Residues Lys201, His220, and 236–244 contribute to the ATP site; that span reads GLSGTGKTT. 2 residues coordinate Mn(2+): Lys201 and His220. Asp257 lines the Mn(2+) pocket. Positions 285, 323, and 448 each coordinate ATP. Residue Arg323 coordinates substrate.

Belongs to the phosphoenolpyruvate carboxykinase (ATP) family. The cofactor is Mn(2+).

It localises to the cytoplasm. The enzyme catalyses oxaloacetate + ATP = phosphoenolpyruvate + ADP + CO2. The protein operates within carbohydrate biosynthesis; gluconeogenesis. Involved in the gluconeogenesis. Catalyzes the conversion of oxaloacetate (OAA) to phosphoenolpyruvate (PEP) through direct phosphoryl transfer between the nucleoside triphosphate and OAA. The polypeptide is Phosphoenolpyruvate carboxykinase (ATP) (Rhodopseudomonas palustris (strain HaA2)).